The primary structure comprises 1364 residues: Trifunctional purine biosynthetic protein adenosine-3 (1364 aa).

The ATP-grasp domain occupies 114 to 321 (KDFMLRHGIP…LFEVMQACCS (208 aa)). Residue 140–202 (IRSAPYQALV…EELLEGEEIS (63 aa)) participates in ATP binding. Positions 291 and 293 each coordinate Mn(2+). Positions 435 to 1154 (AIATAPGLSY…ARTQRMLSQP (720 aa)) are AIRS. Residues 1155 to 1364 (RKRVAVLISG…EAPKDIKDSQ (210 aa)) are GART. 1166–1168 (GSN) provides a ligand contact to N(1)-(5-phospho-beta-D-ribosyl)glycinamide. (6R)-10-formyltetrahydrofolate is bound by residues R1221, 1246–1249 (MRIL), and N1263. The active-site Proton donor is the H1265. Position 1297 to 1301 (1297 to 1301 (DEGVD)) interacts with (6R)-10-formyltetrahydrofolate. 1327 to 1330 (HYAE) contacts N(1)-(5-phospho-beta-D-ribosyl)glycinamide.

This sequence in the N-terminal section; belongs to the GARS family. In the central section; belongs to the AIR synthase family. It in the C-terminal section; belongs to the GART family.

The enzyme catalyses 5-phospho-beta-D-ribosylamine + glycine + ATP = N(1)-(5-phospho-beta-D-ribosyl)glycinamide + ADP + phosphate + H(+). It catalyses the reaction 2-formamido-N(1)-(5-O-phospho-beta-D-ribosyl)acetamidine + ATP = 5-amino-1-(5-phospho-beta-D-ribosyl)imidazole + ADP + phosphate + H(+). The catalysed reaction is N(1)-(5-phospho-beta-D-ribosyl)glycinamide + (6R)-10-formyltetrahydrofolate = N(2)-formyl-N(1)-(5-phospho-beta-D-ribosyl)glycinamide + (6S)-5,6,7,8-tetrahydrofolate + H(+). It functions in the pathway purine metabolism; IMP biosynthesis via de novo pathway; 5-amino-1-(5-phospho-D-ribosyl)imidazole from N(2)-formyl-N(1)-(5-phospho-D-ribosyl)glycinamide: step 2/2. The protein operates within purine metabolism; IMP biosynthesis via de novo pathway; N(1)-(5-phospho-D-ribosyl)glycinamide from 5-phospho-alpha-D-ribose 1-diphosphate: step 2/2. It participates in purine metabolism; IMP biosynthesis via de novo pathway; N(2)-formyl-N(1)-(5-phospho-D-ribosyl)glycinamide from N(1)-(5-phospho-D-ribosyl)glycinamide (10-formyl THF route): step 1/1. Trifunctional enzyme required for de novo purine biosynthesis. This chain is Trifunctional purine biosynthetic protein adenosine-3 (ade3), found in Drosophila pseudoobscura pseudoobscura (Fruit fly).